Consider the following 210-residue polypeptide: Large ribosomal subunit protein uL3 (210 aa).

The protein belongs to the universal ribosomal protein uL3 family. As to quaternary structure, part of the 50S ribosomal subunit. Forms a cluster with proteins L14 and L19.

One of the primary rRNA binding proteins, it binds directly near the 3'-end of the 23S rRNA, where it nucleates assembly of the 50S subunit. The polypeptide is Large ribosomal subunit protein uL3 (Pediococcus pentosaceus (strain ATCC 25745 / CCUG 21536 / LMG 10740 / 183-1w)).